A 289-amino-acid chain; its full sequence is Phosphoribulokinase (289 aa).

12–20 (GSSGAGTTT) is an ATP binding site.

The protein belongs to the phosphoribulokinase family.

It carries out the reaction D-ribulose 5-phosphate + ATP = D-ribulose 1,5-bisphosphate + ADP + H(+). The protein operates within carbohydrate biosynthesis; Calvin cycle. The protein is Phosphoribulokinase (cbbP) of Sinorhizobium medicae (strain WSM419) (Ensifer medicae).